The primary structure comprises 103 residues: Small ribosomal subunit protein uS10 (103 aa).

Belongs to the universal ribosomal protein uS10 family. Part of the 30S ribosomal subunit.

Functionally, involved in the binding of tRNA to the ribosomes. This Chlorobium phaeobacteroides (strain DSM 266 / SMG 266 / 2430) protein is Small ribosomal subunit protein uS10.